Reading from the N-terminus, the 459-residue chain is Bifunctional protein GlmU (459 aa).

Positions Met1–Arg230 are pyrophosphorylase. UDP-N-acetyl-alpha-D-glucosamine contacts are provided by residues Leu9–Gly12, Lys23, Gln73, and Gly78–Thr79. Asp103 serves as a coordination point for Mg(2+). UDP-N-acetyl-alpha-D-glucosamine is bound by residues Gly140, Glu155, Asn170, and Asn228. Asn228 contacts Mg(2+). The segment at Val231–Asn251 is linker. Positions Gly252–Ser459 are N-acetyltransferase. Residues Arg333 and Lys351 each contribute to the UDP-N-acetyl-alpha-D-glucosamine site. The active-site Proton acceptor is the His363. Positions 366 and 377 each coordinate UDP-N-acetyl-alpha-D-glucosamine. Acetyl-CoA contacts are provided by residues Asn386–Tyr387, Ala423, and Arg440.

This sequence in the N-terminal section; belongs to the N-acetylglucosamine-1-phosphate uridyltransferase family. It in the C-terminal section; belongs to the transferase hexapeptide repeat family. Homotrimer. It depends on Mg(2+) as a cofactor.

The protein localises to the cytoplasm. It catalyses the reaction alpha-D-glucosamine 1-phosphate + acetyl-CoA = N-acetyl-alpha-D-glucosamine 1-phosphate + CoA + H(+). The enzyme catalyses N-acetyl-alpha-D-glucosamine 1-phosphate + UTP + H(+) = UDP-N-acetyl-alpha-D-glucosamine + diphosphate. Its pathway is nucleotide-sugar biosynthesis; UDP-N-acetyl-alpha-D-glucosamine biosynthesis; N-acetyl-alpha-D-glucosamine 1-phosphate from alpha-D-glucosamine 6-phosphate (route II): step 2/2. It participates in nucleotide-sugar biosynthesis; UDP-N-acetyl-alpha-D-glucosamine biosynthesis; UDP-N-acetyl-alpha-D-glucosamine from N-acetyl-alpha-D-glucosamine 1-phosphate: step 1/1. The protein operates within bacterial outer membrane biogenesis; LPS lipid A biosynthesis. Catalyzes the last two sequential reactions in the de novo biosynthetic pathway for UDP-N-acetylglucosamine (UDP-GlcNAc). The C-terminal domain catalyzes the transfer of acetyl group from acetyl coenzyme A to glucosamine-1-phosphate (GlcN-1-P) to produce N-acetylglucosamine-1-phosphate (GlcNAc-1-P), which is converted into UDP-GlcNAc by the transfer of uridine 5-monophosphate (from uridine 5-triphosphate), a reaction catalyzed by the N-terminal domain. This is Bifunctional protein GlmU from Geobacillus sp. (strain WCH70).